The sequence spans 76 residues: Omega-conotoxin-like TxO5 (76 aa).

A signal peptide spans 1-22 (MKLTCMMIVAVLFLTAWTFVTA). A propeptide spanning residues 23 to 48 (ITSNGLENLFPKAHHEMKNPEASKLN) is cleaved from the precursor. Intrachain disulfides connect Cys51–Cys66, Cys58–Cys70, and Cys65–Cys75.

Belongs to the conotoxin O1 superfamily. As to expression, expressed by the venom duct.

It localises to the secreted. In terms of biological role, omega-conotoxins act at presynaptic membranes, they bind and block voltage-gated calcium channels (Cav). This chain is Omega-conotoxin-like TxO5, found in Conus textile (Cloth-of-gold cone).